Consider the following 399-residue polypeptide: Succinate--CoA ligase [ADP-forming] subunit beta (399 aa).

The 246-residue stretch at 9-254 folds into the ATP-grasp domain; the sequence is KAVLKSFGAP…TTEEDEKEIE (246 aa). ATP is bound by residues K46, 53 to 55, E109, A112, and E117; that span reads GRG. N209 and D223 together coordinate Mg(2+). Residues N274 and 331–333 each bind substrate; that span reads GIM.

This sequence belongs to the succinate/malate CoA ligase beta subunit family. Heterotetramer of two alpha and two beta subunits. It depends on Mg(2+) as a cofactor.

The catalysed reaction is succinate + ATP + CoA = succinyl-CoA + ADP + phosphate. The enzyme catalyses GTP + succinate + CoA = succinyl-CoA + GDP + phosphate. The protein operates within carbohydrate metabolism; tricarboxylic acid cycle; succinate from succinyl-CoA (ligase route): step 1/1. In terms of biological role, succinyl-CoA synthetase functions in the citric acid cycle (TCA), coupling the hydrolysis of succinyl-CoA to the synthesis of either ATP or GTP and thus represents the only step of substrate-level phosphorylation in the TCA. The beta subunit provides nucleotide specificity of the enzyme and binds the substrate succinate, while the binding sites for coenzyme A and phosphate are found in the alpha subunit. This Maricaulis maris (strain MCS10) (Caulobacter maris) protein is Succinate--CoA ligase [ADP-forming] subunit beta.